Here is a 310-residue protein sequence, read N- to C-terminus: Transaldolase (310 aa).

Lysine 124 (schiff-base intermediate with substrate) is an active-site residue.

It belongs to the transaldolase family. Type 1 subfamily. Homodimer.

Its subcellular location is the cytoplasm. It carries out the reaction D-sedoheptulose 7-phosphate + D-glyceraldehyde 3-phosphate = D-erythrose 4-phosphate + beta-D-fructose 6-phosphate. The protein operates within carbohydrate degradation; pentose phosphate pathway; D-glyceraldehyde 3-phosphate and beta-D-fructose 6-phosphate from D-ribose 5-phosphate and D-xylulose 5-phosphate (non-oxidative stage): step 2/3. Functionally, transaldolase is important for the balance of metabolites in the pentose-phosphate pathway. The protein is Transaldolase of Teredinibacter turnerae (strain ATCC 39867 / T7901).